We begin with the raw amino-acid sequence, 348 residues long: Protein arginine N-methyltransferase 1 (348 aa).

Residues Lys24–Gln342 enclose the SAM-dependent MTase PRMT-type domain. Residues His37, Arg46, Gly70, Glu92, and Glu121 each coordinate S-adenosyl-L-methionine. Residues Glu139 and Glu148 contribute to the active site.

It belongs to the class I-like SAM-binding methyltransferase superfamily. Protein arginine N-methyltransferase family. As to quaternary structure, interacts with daf-16. Interacts with pgl-1 and pgl-3. Interacts with alg-1. As to expression, widely expressed in pharyngeal, body wall muscle, intestinal and vulval cells.

The protein resides in the cytoplasm. It is found in the nucleus. The catalysed reaction is L-arginyl-[protein] + 2 S-adenosyl-L-methionine = N(omega),N(omega)-dimethyl-L-arginyl-[protein] + 2 S-adenosyl-L-homocysteine + 2 H(+). It catalyses the reaction L-arginyl-[protein] + S-adenosyl-L-methionine = N(omega)-methyl-L-arginyl-[protein] + S-adenosyl-L-homocysteine + H(+). Arginine methyltransferase that methylates (mono and asymmetric dimethylation) the guanidino nitrogens of arginyl residues present in target proteins. Catalyzes the formation of monomethylarginine and asymmetric dimethylarginine on histones H2A and H4, a specific tag for epigenetic transcriptional activation. Catalyzes asymmetric arginine dimethylation of mitochondrial proteins necessary for mitochondrial oxidative phosphorylation activity and thus aerobic respiration and ATP synthesis, and the mitochondrial stress response. Methylates arginine residues in P-granule components pgl-1 and pgl-3 to promote P-granule degradation by autophagy in somatic cells to ensure exclusive localization of the P-granules in germ cells. Modulates the interaction of P-granule proteins epg-2 and sepa-1. Methylates arginine residues in daf-16, which blocks ftt-2 binding to daf-16, prevents akt-mediated phosphorylation and allows for daf-16 to translocate to the nucleus. In turn, association with daf-16 therefore allows for the transcriptional activation of daf-16 and regulation of longevity-related genes. Maintains lifespan by modulating daf-16 activity downstream of the daf-2 signaling pathway. Plays a role in heat and oxidative stress resistance. Role in stress resistance and also fat storage may be in association with the daf-2 signaling pathway. Required for normal feeding behavior. The sequence is that of Protein arginine N-methyltransferase 1 from Caenorhabditis elegans.